Here is a 157-residue protein sequence, read N- to C-terminus: Small ribosomal subunit protein uS7 (157 aa).

It belongs to the universal ribosomal protein uS7 family. Part of the 30S ribosomal subunit. Contacts proteins S9 and S11.

In terms of biological role, one of the primary rRNA binding proteins, it binds directly to 16S rRNA where it nucleates assembly of the head domain of the 30S subunit. Is located at the subunit interface close to the decoding center, probably blocks exit of the E-site tRNA. The polypeptide is Small ribosomal subunit protein uS7 (Borrelia duttonii (strain Ly)).